We begin with the raw amino-acid sequence, 45 residues long: Bacteriocin fulvocin-C (45 aa).

Functionally, bacteriocin. The chain is Bacteriocin fulvocin-C from Myxococcus fulvus.